A 213-amino-acid chain; its full sequence is Adenylate kinase (213 aa).

10–15 (GAGKGT) is a binding site for ATP. The tract at residues 30-59 (AVGDIFRTIIKTSTSEAELINNYVKQGALI) is NMP. AMP-binding positions include Arg-36, 57-59 (ALI), 85-88 (GYPR), and Gln-92. The LID stretch occupies residues 123–161 (GRYSCKNCGKIYNIHFLQPKIEHVCDVCSSSVFDYRKDD). Residue Arg-124 coordinates ATP. Positions 127 and 130 each coordinate Zn(2+). 133–134 (IY) lines the ATP pocket. Zn(2+)-binding residues include Cys-147 and Cys-150. Arg-158 and Arg-169 together coordinate AMP. Lys-197 lines the ATP pocket.

It belongs to the adenylate kinase family. In terms of assembly, monomer.

It localises to the cytoplasm. The enzyme catalyses AMP + ATP = 2 ADP. It participates in purine metabolism; AMP biosynthesis via salvage pathway; AMP from ADP: step 1/1. In terms of biological role, catalyzes the reversible transfer of the terminal phosphate group between ATP and AMP. Plays an important role in cellular energy homeostasis and in adenine nucleotide metabolism. The polypeptide is Adenylate kinase (Rickettsia prowazekii (strain Madrid E)).